The chain runs to 354 residues: Nicotinate-nucleotide--dimethylbenzimidazole phosphoribosyltransferase (354 aa).

Glu322 acts as the Proton acceptor in catalysis.

It belongs to the CobT family.

It catalyses the reaction 5,6-dimethylbenzimidazole + nicotinate beta-D-ribonucleotide = alpha-ribazole 5'-phosphate + nicotinate + H(+). The protein operates within nucleoside biosynthesis; alpha-ribazole biosynthesis; alpha-ribazole from 5,6-dimethylbenzimidazole: step 1/2. Its function is as follows. Catalyzes the synthesis of alpha-ribazole-5'-phosphate from nicotinate mononucleotide (NAMN) and 5,6-dimethylbenzimidazole (DMB). This chain is Nicotinate-nucleotide--dimethylbenzimidazole phosphoribosyltransferase, found in Solidesulfovibrio magneticus (strain ATCC 700980 / DSM 13731 / RS-1) (Desulfovibrio magneticus).